Here is a 212-residue protein sequence, read N- to C-terminus: Holliday junction branch migration complex subunit RuvA (212 aa).

Residues 1 to 63 (MIAKLKGLID…EDAISLFGFL (63 aa)) form a domain I region. The segment at 64 to 142 (ETGERDWFRL…KIALGGFSPG (79 aa)) is domain II. The segment at 143 to 155 (GIKDALSASAPLP) is flexible linker. A domain III region spans residues 156–212 (AASGRMEDAVSALVNLGYKRLEAFQAVGETARELGDEADSSALIRAALKHLGKGLLG).

Belongs to the RuvA family. As to quaternary structure, homotetramer. Forms an RuvA(8)-RuvB(12)-Holliday junction (HJ) complex. HJ DNA is sandwiched between 2 RuvA tetramers; dsDNA enters through RuvA and exits via RuvB. An RuvB hexamer assembles on each DNA strand where it exits the tetramer. Each RuvB hexamer is contacted by two RuvA subunits (via domain III) on 2 adjacent RuvB subunits; this complex drives branch migration. In the full resolvosome a probable DNA-RuvA(4)-RuvB(12)-RuvC(2) complex forms which resolves the HJ.

The protein resides in the cytoplasm. Functionally, the RuvA-RuvB-RuvC complex processes Holliday junction (HJ) DNA during genetic recombination and DNA repair, while the RuvA-RuvB complex plays an important role in the rescue of blocked DNA replication forks via replication fork reversal (RFR). RuvA specifically binds to HJ cruciform DNA, conferring on it an open structure. The RuvB hexamer acts as an ATP-dependent pump, pulling dsDNA into and through the RuvAB complex. HJ branch migration allows RuvC to scan DNA until it finds its consensus sequence, where it cleaves and resolves the cruciform DNA. This is Holliday junction branch migration complex subunit RuvA from Paramagnetospirillum magneticum (strain ATCC 700264 / AMB-1) (Magnetospirillum magneticum).